A 69-amino-acid chain; its full sequence is uncharacterized protein (69 aa).

This is an uncharacterized protein from Saccharomyces cerevisiae (strain ATCC 204508 / S288c) (Baker's yeast).